Here is a 294-residue protein sequence, read N- to C-terminus: 4-hydroxy-tetrahydrodipicolinate synthase (294 aa).

A pyruvate-binding site is contributed by Thr44. Tyr132 (proton donor/acceptor) is an active-site residue. The active-site Schiff-base intermediate with substrate is Lys160. Val202 lines the pyruvate pocket.

The protein belongs to the DapA family. In terms of assembly, homotetramer; dimer of dimers.

The protein resides in the cytoplasm. It carries out the reaction L-aspartate 4-semialdehyde + pyruvate = (2S,4S)-4-hydroxy-2,3,4,5-tetrahydrodipicolinate + H2O + H(+). The protein operates within amino-acid biosynthesis; L-lysine biosynthesis via DAP pathway; (S)-tetrahydrodipicolinate from L-aspartate: step 3/4. Functionally, catalyzes the condensation of (S)-aspartate-beta-semialdehyde [(S)-ASA] and pyruvate to 4-hydroxy-tetrahydrodipicolinate (HTPA). In Leptospira biflexa serovar Patoc (strain Patoc 1 / Ames), this protein is 4-hydroxy-tetrahydrodipicolinate synthase.